A 1173-amino-acid polypeptide reads, in one-letter code: Pumilio homolog 2 (1173 aa).

Disordered regions lie at residues 41–68 (VSSAGQAHGNNPHAMPPGAPSAQVPLSG), 265–296 (VSKLNGRGLPNGIESDCKDFNRTPGSRQASPT), 480–518 (QQAATQASQGQQQVMRATSNQRPLTPNQAQQGQQPESLA), 592–662 (LTGA…SLGF), and 730–759 (PISMPLPSQTSGHSLTPPPSLSSHGSSSSL). Over residues 287-296 (TPGSRQASPT) the composition is skewed to polar residues. Positions 480-492 (QQAATQASQGQQQ) are enriched in low complexity. Residues 493-518 (VMRATSNQRPLTPNQAQQGQQPESLA) are compositionally biased toward polar residues. The span at 606-622 (QQQQQQQQQQHQQQQQQ) shows a compositional bias: low complexity. Over residues 623-633 (PNANLHSNSFY) the composition is skewed to polar residues. Positions 634-657 (GNSTMSNNSQSSSLFSPGPGQPGS) are enriched in low complexity. The PUM-HD domain maps to 815–1155 (GRSRLLEDFR…HILAKLEKYY (341 aa)). Pumilio repeat units lie at residues 835 to 870 (DLMGHIVEFSQDQHGSRFIQQKLERASPAERQLVFS), 871 to 906 (EILQAAYQLMTDVFGNYVIQKFFEFGSMDQKLALAT), 907 to 942 (RIRGHVLPLALQMYGCRVIQKALESISTDQQSEMVR), 943 to 978 (ELDGHVLKCVKDQNGNHVVQKCIECVTPQSLHFIIE), 979 to 1014 (AFKGQVYVLSTHPYGCRVIQRILEHCTPEQTLPILE), 1015 to 1050 (ELHQSTEQLVQDQYGNYVIQHVLEHGRSDDKSKIVC), 1051 to 1086 (EVRGQVLVLSQHKFASNVVEKCVTHSSRTERAFLID), 1087 to 1129 (EICC…IIMH), and 1130 to 1167 (KIRPHITTLRKYTYGKHILAKLEKYYMKNSPDLGLLVG). The interval 850 to 854 (SRFIQ) is adenine-nucleotide binding in RNA target. The segment at 886-890 (NYVIQ) is uracil-nucleotide binding in RNA target. The tract at residues 922–926 (CRVIQ) is adenine-nucleotide binding in RNA target. Residues 958–962 (NHVVQ) form a non-specific-nucleotide binding in RNA target region. The adenine-nucleotide binding in RNA target stretch occupies residues 994–998 (CRVIQ). A uracil-nucleotide binding in RNA target region spans residues 1030-1034 (NYVIQ). Residues 1066–1070 (SNVVE) form a guanine-nucleotide binding in RNA target region. The interval 1109–1113 (NYVVQ) is uracil-nucleotide binding in RNA target.

Component of a complex with papd4, sympk, tacc3, parn, dazl and cpeb1. Phosphorylated.

The protein localises to the cytoplasm. The protein resides in the P-body. It localises to the cytoplasmic granule. In terms of biological role, sequence-specific RNA-binding protein that acts as a post-transcriptional repressor by binding the 3'-UTR of mRNA targets. Binds to an RNA consensus sequence, the Pumilio Response Element (PRE), 5'-UGUANAUA-3', that is related to the Nanos Response Element (NRE). Mediates post-transcriptional repression of transcripts via different mechanisms: acts via direct recruitment of deadenylase complexes leading to translational inhibition and mRNA degradation. Also mediates deadenylation-independent repression by promoting accessibility of miRNAs. This is Pumilio homolog 2 (pum2) from Xenopus laevis (African clawed frog).